The primary structure comprises 159 residues: Serine-protein kinase RsbW (159 aa).

This sequence belongs to the anti-sigma-factor family.

The enzyme catalyses L-seryl-[protein] + ATP = O-phospho-L-seryl-[protein] + ADP + H(+). It carries out the reaction L-threonyl-[protein] + ATP = O-phospho-L-threonyl-[protein] + ADP + H(+). Functionally, negative regulator of sigma-B activity. Phosphorylates and inactivates its specific antagonist protein, RsbV. Upon phosphorylation of RsbV, RsbW is released and binds to sigma-B, thereby blocking its ability to form an RNA polymerase holoenzyme (E-sigma-B). The polypeptide is Serine-protein kinase RsbW (Staphylococcus epidermidis).